The sequence spans 281 residues: Hydroxyethylthiazole kinase (281 aa).

Residues arginine 124 and serine 169 each contribute to the ATP site.

The protein belongs to the Thz kinase family. Mg(2+) serves as cofactor.

The enzyme catalyses 5-(2-hydroxyethyl)-4-methylthiazole + ATP = 4-methyl-5-(2-phosphooxyethyl)-thiazole + ADP + H(+). It participates in cofactor biosynthesis; thiamine diphosphate biosynthesis; 4-methyl-5-(2-phosphoethyl)-thiazole from 5-(2-hydroxyethyl)-4-methylthiazole: step 1/1. Catalyzes the phosphorylation of the hydroxyl group of 4-methyl-5-beta-hydroxyethylthiazole (THZ). The sequence is that of Hydroxyethylthiazole kinase from Rhodococcus erythropolis (strain PR4 / NBRC 100887).